Reading from the N-terminus, the 1252-residue chain is MIEIWKSQCTRILSISPDSGIQYWKKTESMKSQYLEEVGVALDSFVYWKEVIWKTKQEFRAEYSFPKTSLAANKVIDDDDINIDSLKFVKEVINVFVGNINVLVKINDPRSWFFVPGLKEQIEQVLKEFKLLRFFVCFVSNKCIEPQYRCSTFYSHVLIEASHIAMVVCLHLPIYGNGNQDLAPSEKMIDIWKSHCPDSFPYMKVISKTNVIIKTLYVDELRSCPSCNSYDSFDNWKEVIWKTKQEFRAEYSFPKTSLAVNKVDDVNTHSPKFVMEVIDVFVGNLNVLVEINDPSSWLFVPGHMKEQIEQVLKELKLLRFFVCFVSSKCIEPQYRCTTFYTLVLIEASHNAMVVWLHLPVYGNGNQDLAPSEVSRLFSDFMEMKIKSIEPGISRNSIYIDVLQALKSTIPQAQKKQLDIPTHSLTVGFSGQMANLQEMLCLLRDNLIHLPILDLEFHLQDMDSVIVDAGLLIYSLYDIKGEKEDTVLDDMNQALGFDLPRNIEPIKAMVYLVMQKAFHCNLPRIHGLGYVDFLLKNLNDFQGRYSDSLAFLKNQLQVIQTEFESLQPFLKVVAEEPHNKLKTLNEDCATQIIRKAYEVEYVVDACINKETPHWCLKCWLLDIIEENTCIKAKIQEKNTVEDTMKSVIARTSSQLARTPRMNEEIVGFEDDLLLALLRDAIGEGSVRRELHANELSDMLRKTLLPRRYLILVDDVWENSVWDDLRGCFPDANNRSRIFGPSHPMLGPPKSKLPTHQMLSTGREVGEQVANNLGTHIHNDSRAIVDQSYHVLPCHLKSCFLYFGAFLEDRVIDISRLIRLWISEAFIKSSEGRSLEDIAEGYLENLIGRNLVMVTQRAISDGKVKACRLHDVLLDFCKERAAEENFLLWIKRDQTTKAVYSHKQHAHLAFTEMDNLVEWSASCSLVGSVLFKSYDPYFACRPLSSHAFAVSHILLNFKFLKVLDLEHQIVIDFIPTELPYLRYFSALIDQNSIPSSKSNLWNLETLILKRRSAATYKTLLLPSTVWDMVKLIYLYIPNFSPENKKALFKNSPKLDDLETLSNPYFARVEDYLSETVDHLKHLEVLELYRVEFGDHGEWKVSSGKFPKLKILKLDYVSLMKWIVADDAFPNLEQLVSLGCQNLMEIPSCFTDILSLKYIEVDICNKSVVKSAKYIQETQVEYNQNTNFKLVIIKKLVLKFDRFHGDEEIRKRLSSLPGIKSISINRGEKKLTVGGDVDADEVRLVVGKLNKRDML.

The stretch at 543-566 forms a coiled coil; the sequence is RYSDSLAFLKNQLQVIQTEFESLQ. NB-ARC domains follow at residues 684-736 and 786-830; these read SVRR…RSRI and SYHV…SSEG. 7 LRR repeats span residues 955–980, 998–1026, 1077–1100, 1103–1125, 1126–1149, 1187–1212, and 1213–1236; these read FKFLKVLDLEHQIVIDFIPTELPYLR, LWNLETLILKRRSAATYKTLLLPSTVWDM, LKHLEVLELYRVEFGDHGEWKVSS, FPKLKILKLDYVSLMKWIVADDA, FPNLEQLVSLGCQNLMEIPSCFTD, LVIIKKLVLKFDRFHGDEEIRKRLSS, and LPGIKSISINRGEKKLTVGGDVDA. The 65-residue stretch at 1188–1252 folds into the HMA domain; sequence VIIKKLVLKF…VGKLNKRDML (65 aa).

The protein belongs to the disease resistance NB-LRR family.

The protein localises to the cytoplasm. It is found in the membrane. In terms of biological role, confers resistance to late blight (Phytophthora infestans) races carrying the avirulence gene Avr1. Resistance proteins guard the plant against pathogens that contain an appropriate avirulence protein via an indirect interaction with this avirulence protein. That triggers a defense system including the hypersensitive response, which restricts the pathogen growth. This chain is Putative late blight resistance protein homolog R1B-11 (R1B-11), found in Solanum demissum (Wild potato).